We begin with the raw amino-acid sequence, 249 residues long: NH(3)-dependent NAD(+) synthetase (249 aa).

Residue D34 participates in Mg(2+) binding. Position 110 (R110) interacts with deamido-NAD(+). T130 is a binding site for ATP. E135 contributes to the Mg(2+) binding site. K143 and D150 together coordinate deamido-NAD(+). ATP-binding residues include K159 and S181. 232–233 (HK) is a binding site for deamido-NAD(+).

It belongs to the NAD synthetase family. As to quaternary structure, homodimer.

It carries out the reaction deamido-NAD(+) + NH4(+) + ATP = AMP + diphosphate + NAD(+) + H(+). Its pathway is cofactor biosynthesis; NAD(+) biosynthesis; NAD(+) from deamido-NAD(+) (ammonia route): step 1/1. Catalyzes the ATP-dependent amidation of deamido-NAD to form NAD. Uses ammonia as a nitrogen source. The sequence is that of NH(3)-dependent NAD(+) synthetase from Picrophilus torridus (strain ATCC 700027 / DSM 9790 / JCM 10055 / NBRC 100828 / KAW 2/3).